We begin with the raw amino-acid sequence, 205 residues long: Urease accessory protein UreG (205 aa).

A GTP-binding site is contributed by 14 to 21; it reads GPVGSGKT.

The protein belongs to the SIMIBI class G3E GTPase family. UreG subfamily. Homodimer. UreD, UreF and UreG form a complex that acts as a GTP-hydrolysis-dependent molecular chaperone, activating the urease apoprotein by helping to assemble the nickel containing metallocenter of UreC. The UreE protein probably delivers the nickel.

The protein resides in the cytoplasm. Functionally, facilitates the functional incorporation of the urease nickel metallocenter. This process requires GTP hydrolysis, probably effectuated by UreG. The protein is Urease accessory protein UreG of Proteus mirabilis (strain HI4320).